The following is a 334-amino-acid chain: Holliday junction branch migration complex subunit RuvB (334 aa).

A large ATPase domain (RuvB-L) region spans residues 1-182; sequence MDERLVSSEL…FGVLSRLEYY (182 aa). Residues L21, R22, G63, K66, T67, T68, 129–131, R172, Y182, and R219 each bind ATP; that span reads EDF. A Mg(2+)-binding site is contributed by T67. The tract at residues 183 to 253 is small ATPAse domain (RuvB-S); sequence TRDELSEIVI…VAVDALERLQ (71 aa). A head domain (RuvB-H) region spans residues 256–334; sequence KLGLDHIDRK…HFKMEVPNHD (79 aa). DNA-binding residues include R311 and R316.

Belongs to the RuvB family. Homohexamer. Forms an RuvA(8)-RuvB(12)-Holliday junction (HJ) complex. HJ DNA is sandwiched between 2 RuvA tetramers; dsDNA enters through RuvA and exits via RuvB. An RuvB hexamer assembles on each DNA strand where it exits the tetramer. Each RuvB hexamer is contacted by two RuvA subunits (via domain III) on 2 adjacent RuvB subunits; this complex drives branch migration. In the full resolvosome a probable DNA-RuvA(4)-RuvB(12)-RuvC(2) complex forms which resolves the HJ.

The protein resides in the cytoplasm. It carries out the reaction ATP + H2O = ADP + phosphate + H(+). Functionally, the RuvA-RuvB-RuvC complex processes Holliday junction (HJ) DNA during genetic recombination and DNA repair, while the RuvA-RuvB complex plays an important role in the rescue of blocked DNA replication forks via replication fork reversal (RFR). RuvA specifically binds to HJ cruciform DNA, conferring on it an open structure. The RuvB hexamer acts as an ATP-dependent pump, pulling dsDNA into and through the RuvAB complex. RuvB forms 2 homohexamers on either side of HJ DNA bound by 1 or 2 RuvA tetramers; 4 subunits per hexamer contact DNA at a time. Coordinated motions by a converter formed by DNA-disengaged RuvB subunits stimulates ATP hydrolysis and nucleotide exchange. Immobilization of the converter enables RuvB to convert the ATP-contained energy into a lever motion, pulling 2 nucleotides of DNA out of the RuvA tetramer per ATP hydrolyzed, thus driving DNA branch migration. The RuvB motors rotate together with the DNA substrate, which together with the progressing nucleotide cycle form the mechanistic basis for DNA recombination by continuous HJ branch migration. Branch migration allows RuvC to scan DNA until it finds its consensus sequence, where it cleaves and resolves cruciform DNA. The polypeptide is Holliday junction branch migration complex subunit RuvB (Bacillus licheniformis (strain ATCC 14580 / DSM 13 / JCM 2505 / CCUG 7422 / NBRC 12200 / NCIMB 9375 / NCTC 10341 / NRRL NRS-1264 / Gibson 46)).